The primary structure comprises 443 residues: Oxygen-dependent coproporphyrinogen-III oxidase, mitochondrial (443 aa).

A mitochondrion-targeting transit peptide spans 1-98 (MALRLGQLGS…EMVPKSSGAR (98 aa)). The interval 90 to 111 (MVPKSSGARSPSPGRLEEDGDE) is disordered. The residue at position 101 (Ser-101) is a Phosphoserine. The interval 182-191 (VLQDGRVFEK) is important for dimerization. A coproporphyrinogen III-binding site is contributed by Ser-233. His-247 (proton donor) is an active-site residue. 249-251 (NYR) is a binding site for coproporphyrinogen III. An important for dimerization region spans residues 381–417 (YVEFNLVYDRGTKFGLFTPGSRIESILMSLPLTARWE). Lys-393 is modified (N6-acetyllysine; alternate). N6-succinyllysine; alternate is present on Lys-393. 400–402 (GSR) provides a ligand contact to coproporphyrinogen III.

The protein belongs to the aerobic coproporphyrinogen-III oxidase family. As to quaternary structure, homodimer.

The protein resides in the mitochondrion intermembrane space. It carries out the reaction coproporphyrinogen III + O2 + 2 H(+) = protoporphyrinogen IX + 2 CO2 + 2 H2O. It functions in the pathway porphyrin-containing compound metabolism; protoporphyrin-IX biosynthesis; protoporphyrinogen-IX from coproporphyrinogen-III (O2 route): step 1/1. Involved in the heme biosynthesis. Catalyzes the aerobic oxidative decarboxylation of propionate groups of rings A and B of coproporphyrinogen-III to yield the vinyl groups in protoporphyrinogen-IX. The sequence is that of Oxygen-dependent coproporphyrinogen-III oxidase, mitochondrial from Rattus norvegicus (Rat).